We begin with the raw amino-acid sequence, 818 residues long: Exchange factor for Arf-6 (818 aa).

4 disordered regions span residues 92–123 (AQKL…ESSP), 137–168 (MEST…ENDD), 208–291 (NHHH…GVSN), and 326–383 (RTTP…VGGE). Residues 107 to 119 (IERRGSLARKTSE) show a composition bias toward basic and acidic residues. The span at 140–149 (TDVEESEEET) shows a compositional bias: acidic residues. The span at 154-165 (TDEKENQKKPNE) shows a compositional bias: basic and acidic residues. Composition is skewed to polar residues over residues 213–223 (YNSSPQISTLS) and 255–269 (MSNN…SPEN). Over residues 326 to 347 (RTTPNTAASNSSASASPSLHAT) the composition is skewed to low complexity. One can recognise an SEC7 domain in the interval 356–532 (GVSLRSAESS…KTLFQSIKDN (177 aa)). The span at 361–380 (SAESSNLNQTAVPSTSTNSV) shows a compositional bias: polar residues. Residues 569–681 (VEYYSGFLMR…WCEKINFVAA (113 aa)) enclose the PH domain. Residues 782-799 (TMNIMMTPTRRQQQNQKP) are compositionally biased toward polar residues. The interval 782–818 (TMNIMMTPTRRQQQNQKPVVSEDRLSYTDAVNGAAAH) is disordered.

In terms of assembly, interacts (via short N-terminal region) with microtubule-associated proteins tac-1 and zyg-8.

It is found in the cytoplasm. The protein localises to the cell cortex. It localises to the cell membrane. In terms of biological role, guanine nucleotide exchange factor for arf-6. Involved in response to injury in mechanosensory neurons. Inhibits axon regrowth via microtubule dynamics, possibly by inducing axonal microtubule catastrophes. Limits microtubule growth near the cellular cortex of early embryonic cells. This Caenorhabditis elegans protein is Exchange factor for Arf-6.